The following is a 317-amino-acid chain: Acetyl-coenzyme A carboxylase carboxyl transferase subunit alpha (317 aa).

The CoA carboxyltransferase C-terminal domain occupies 33–294; sequence NINKEINCLR…KNRILKDLKE (262 aa).

Belongs to the AccA family. Acetyl-CoA carboxylase is a heterohexamer composed of biotin carboxyl carrier protein (AccB), biotin carboxylase (AccC) and two subunits each of ACCase subunit alpha (AccA) and ACCase subunit beta (AccD).

Its subcellular location is the cytoplasm. The enzyme catalyses N(6)-carboxybiotinyl-L-lysyl-[protein] + acetyl-CoA = N(6)-biotinyl-L-lysyl-[protein] + malonyl-CoA. Its pathway is lipid metabolism; malonyl-CoA biosynthesis; malonyl-CoA from acetyl-CoA: step 1/1. Its function is as follows. Component of the acetyl coenzyme A carboxylase (ACC) complex. First, biotin carboxylase catalyzes the carboxylation of biotin on its carrier protein (BCCP) and then the CO(2) group is transferred by the carboxyltransferase to acetyl-CoA to form malonyl-CoA. The polypeptide is Acetyl-coenzyme A carboxylase carboxyl transferase subunit alpha (Wigglesworthia glossinidia brevipalpis).